The chain runs to 312 residues: Glyoxylate/hydroxypyruvate reductase A (312 aa).

The active site involves Arg227. Residue His275 is the Proton donor of the active site.

This sequence belongs to the D-isomer specific 2-hydroxyacid dehydrogenase family. GhrA subfamily.

Its subcellular location is the cytoplasm. It catalyses the reaction glycolate + NADP(+) = glyoxylate + NADPH + H(+). It carries out the reaction (R)-glycerate + NAD(+) = 3-hydroxypyruvate + NADH + H(+). The enzyme catalyses (R)-glycerate + NADP(+) = 3-hydroxypyruvate + NADPH + H(+). Functionally, catalyzes the NADPH-dependent reduction of glyoxylate and hydroxypyruvate into glycolate and glycerate, respectively. This is Glyoxylate/hydroxypyruvate reductase A from Escherichia coli (strain SMS-3-5 / SECEC).